The chain runs to 760 residues: MKLNVDGLLVYFPYDYIYPEQFSYMLELKRTLDAKGHGVLEMPSGTGKTVSLLALIVAYQRAFPLEVTKLIYCSRTVPEIEKVIEELRKLLSFYEQQEGEKLPFLGLALSSRKNLCIHPEVTPLRFGKDVDGKCHSLTASYVRAQYQQDASLPHCRFYEEFDAHGRQVPLPAGIYNLDDLKALGQRQGWCPYFLARYSILHANVVVYSYHYLLDPKIADLVSKELARKAVVVFDEAHNIDNVCIDSMSVNLTRRTLDRCQSNLDTLQKTVLRIKETDEQRLRDEYRRLVEGLREASAARETDAHLANPVLPDEVLQEAVPGSIRTAEHFLGFLRRLLEYVKWRLRVQHVVQESPPAFLSGLAQRVCIQRKPLRFCAERLRSLLHTLEIADLADFSPLTLLANFATLVSTYAKGFTIIIEPFDDRTPTIANPILHFSCMDASLAIKPVFERFQSVIITSGTLSPLDIYPKILDFHPVTMATFTMTLARVCLCPMIIGRGNDQVAISSKFETREDIAVIRNYGNLLLEMSAVVPDGIVAFFTSYQYMESTVASWYEQGILENIQRNKLLFIETQDGAETSVALEKYQEACENGRGAILLSVARGKVSEGIDFVHHYGRAVIMFGVPYVYTQSRILKARLEYLRDQFQIRENDFLTFDAMRHAAQCVGRAIRGKTDYGLMVFADKRFARADKRGKLPRWIQEHLTDSNLNLTVDEGVQVAKYFLRQMAQPFHREDQLGLSLLSLEQLQSEETLRRVEQIAQQL.

In terms of domain architecture, Helicase ATP-binding spans 7 to 283 (GLLVYFPYDY…KETDEQRLRD (277 aa)). 42 to 49 (MPSGTGKT) contributes to the ATP binding site. The [4Fe-4S] cluster site is built by cysteine 116, cysteine 134, cysteine 155, and cysteine 190. The short motif at 234–237 (DEAH) is the DEAH box element. Residues 438-637 (MDASLAIKPV…TQSRILKARL (200 aa)) are mediates interaction with MMS19. The Nuclear localization signal motif lies at 682 to 695 (KRFARADKRGKLPR).

This sequence belongs to the helicase family. RAD3/XPD subfamily. As to quaternary structure, component of the 7-subunit TFIIH core complex composed of XPB/ERCC3, XPD/ERCC2, GTF2H1, GTF2H2, GTF2H3, GTF2H4 and GTF2H5, which is active in NER. The core complex associates with the 3-subunit CDK-activating kinase (CAK) module composed of CCNH/cyclin H, CDK7 and MNAT1 to form the 10-subunit holoenzyme (holo-TFIIH) active in transcription. The interaction with GTF2H2 results in the stimulation of the 5'--&gt;3' helicase activity. Component of the MMXD complex, which includes CIAO1, ERCC2, CIAO2B, MMS19 and SLC25A5. Interacts with CIAO1 and CIAO2B; the interaction WITH CIAO2B is direct. Interacts with ATF7IP. Interacts directly with MMS19. Part of TBP-based Pol II pre-initiation complex (PIC), in which Pol II core assembles with general transcription factors and other specific initiation factors including GTF2E1, GTF2E2, GTF2F1, GTF2F2, TCEA1, ERCC2, ERCC3, GTF2H2, GTF2H3, GTF2H4, GTF2H5, GTF2A1, GTF2A2, GTF2B and TBP; this large multi-subunit PIC complex mediates DNA unwinding and targets Pol II core to the transcription start site where the first phosphodiester bond forms. The cofactor is Mg(2+). It depends on [4Fe-4S] cluster as a cofactor. ISGylated.

The protein resides in the nucleus. It is found in the cytoplasm. Its subcellular location is the cytoskeleton. The protein localises to the spindle. It catalyses the reaction Couples ATP hydrolysis with the unwinding of duplex DNA at the replication fork by translocating in the 5'-3' direction. This creates two antiparallel DNA single strands (ssDNA). The leading ssDNA polymer is the template for DNA polymerase III holoenzyme which synthesizes a continuous strand.. The enzyme catalyses ATP + H2O = ADP + phosphate + H(+). ATP-dependent 5'-3' DNA helicase. Component of the general transcription and DNA repair factor IIH (TFIIH) core complex which is involved in general and transcription-coupled nucleotide excision repair (NER) of damaged DNA. When complexed to CDK-activating kinase (CAK), involved in transcription by RNA polymerase II. In NER, TFIIH acts by opening DNA around the lesion to allow the excision of the damaged oligonucleotide and its replacement by a new DNA fragment. The ATP-dependent helicase activity of XPD/ERCC2 is required for DNA opening. In transcription, TFIIH has an essential role in transcription initiation. When the pre-initiation complex (PIC) has been established, TFIIH is required for promoter opening and promoter escape. Phosphorylation of the C-terminal tail (CTD) of the largest subunit of RNA polymerase II by the kinase module CAK controls the initiation of transcription. XPD/ERCC2 acts by forming a bridge between CAK and the core-TFIIH complex. Involved in the regulation of vitamin-D receptor activity. As part of the mitotic spindle-associated MMXD complex it plays a role in chromosome segregation. Might have a role in aging process and could play a causative role in the generation of skin cancers. This chain is General transcription and DNA repair factor IIH helicase subunit XPD, found in Cricetulus griseus (Chinese hamster).